The following is a 347-amino-acid chain: Probable dual-specificity RNA methyltransferase RlmN (347 aa).

Glutamate 91 serves as the catalytic Proton acceptor. The Radical SAM core domain maps to 97 to 327 (YKYGNSICVS…ATVRREMGSD (231 aa)). A disulfide bridge links cysteine 104 with cysteine 332. [4Fe-4S] cluster contacts are provided by cysteine 111, cysteine 115, and cysteine 118. Residues 158–159 (GE), serine 190, 213–215 (SLH), and asparagine 289 each bind S-adenosyl-L-methionine. The active-site S-methylcysteine intermediate is the cysteine 332.

This sequence belongs to the radical SAM superfamily. RlmN family. [4Fe-4S] cluster serves as cofactor.

Its subcellular location is the cytoplasm. The enzyme catalyses adenosine(2503) in 23S rRNA + 2 reduced [2Fe-2S]-[ferredoxin] + 2 S-adenosyl-L-methionine = 2-methyladenosine(2503) in 23S rRNA + 5'-deoxyadenosine + L-methionine + 2 oxidized [2Fe-2S]-[ferredoxin] + S-adenosyl-L-homocysteine. The catalysed reaction is adenosine(37) in tRNA + 2 reduced [2Fe-2S]-[ferredoxin] + 2 S-adenosyl-L-methionine = 2-methyladenosine(37) in tRNA + 5'-deoxyadenosine + L-methionine + 2 oxidized [2Fe-2S]-[ferredoxin] + S-adenosyl-L-homocysteine. Functionally, specifically methylates position 2 of adenine 2503 in 23S rRNA and position 2 of adenine 37 in tRNAs. The sequence is that of Probable dual-specificity RNA methyltransferase RlmN from Clostridium perfringens (strain SM101 / Type A).